The following is a 669-amino-acid chain: Threonine--tRNA ligase (669 aa).

In terms of domain architecture, TGS spans 3-60 (DAQQITLLVDGEETKVTTGTTGAELFFERRDVVVARVNGELKDLDQELPEGAEVEGVT). A catalytic region spans residues 260–566 (DHRKLGSELD…LTEHYAGAFP (307 aa)). The Zn(2+) site is built by Cys-365, His-416, and His-543.

The protein belongs to the class-II aminoacyl-tRNA synthetase family. As to quaternary structure, homodimer. It depends on Zn(2+) as a cofactor.

Its subcellular location is the cytoplasm. The enzyme catalyses tRNA(Thr) + L-threonine + ATP = L-threonyl-tRNA(Thr) + AMP + diphosphate + H(+). Its function is as follows. Catalyzes the attachment of threonine to tRNA(Thr) in a two-step reaction: L-threonine is first activated by ATP to form Thr-AMP and then transferred to the acceptor end of tRNA(Thr). Also edits incorrectly charged L-seryl-tRNA(Thr). This Pseudarthrobacter chlorophenolicus (strain ATCC 700700 / DSM 12829 / CIP 107037 / JCM 12360 / KCTC 9906 / NCIMB 13794 / A6) (Arthrobacter chlorophenolicus) protein is Threonine--tRNA ligase.